The sequence spans 313 residues: GTPase Era (313 aa).

Residues 13 to 186 enclose the Era-type G domain; it reads RSGFVSFVGR…ADLLVGLLPE (174 aa). Residues 21–28 are G1; the sequence is GRPNAGKS. A GTP-binding site is contributed by 21–28; that stretch reads GRPNAGKS. The G2 stretch occupies residues 47-51; that stretch reads QTTRT. Residues 68–71 form a G3 region; the sequence is DTPG. Residues 68-72 and 131-134 each bind GTP; these read DTPGL and TKTD. The segment at 131–134 is G4; sequence TKTD. Positions 165–167 are G5; it reads VSA. The 83-residue stretch at 217 to 299 folds into the KH type-2 domain; that stretch reads LRDELPHSVA…YLDLHVKIAK (83 aa).

Belongs to the TRAFAC class TrmE-Era-EngA-EngB-Septin-like GTPase superfamily. Era GTPase family. As to quaternary structure, monomer.

The protein resides in the cytoplasm. Its subcellular location is the cell membrane. In terms of biological role, an essential GTPase that binds both GDP and GTP, with rapid nucleotide exchange. Plays a role in 16S rRNA processing and 30S ribosomal subunit biogenesis and possibly also in cell cycle regulation and energy metabolism. This Nocardioides sp. (strain ATCC BAA-499 / JS614) protein is GTPase Era.